The sequence spans 86 residues: MSLLDYFKTKKEPNTAVTAKERLQIIVAHQRGEREAPDYFPQMKQEIIEVIRKYVQVGPDQVSVQLEQTDDNFSVLELNVTLPEQN.

It belongs to the MinE family.

In terms of biological role, prevents the cell division inhibition by proteins MinC and MinD at internal division sites while permitting inhibition at polar sites. This ensures cell division at the proper site by restricting the formation of a division septum at the midpoint of the long axis of the cell. This chain is Cell division topological specificity factor, found in Shewanella pealeana (strain ATCC 700345 / ANG-SQ1).